Consider the following 470-residue polypeptide: Shutoff alkaline exonuclease (470 aa).

Belongs to the herpesviridae alkaline nuclease family. In terms of assembly, forms a complex with the DNA polymerase, the DNA polymerase processivity factor, and the major DNA binding protein.

Its subcellular location is the host nucleus. The protein resides in the host cytoplasm. Plays a role in processing non linear or branched viral DNA intermediates in order to promote the production of mature packaged unit-length linear progeny viral DNA molecules. Exhibits endonuclease and exonuclease activities and accepts both double-stranded and single-stranded DNA as substrate. Exonuclease digestion of DNA is in the 5'-&gt; 3' direction and the products are 5'-monophosphate nucleosides. Additionally, forms a recombinase with the major DNA-binding protein, which displays strand exchange activity. Also acts as a cytoplasmic RNA endonuclease that induces degradation of the majority of the cellular messenger RNAs during early lytic infection. The resulting inhibition of cellular protein synthesis serves to ensure maximal viral gene expression and evasion from host immune response. Internally cleaves host mRNAs which are then degraded by the cellular exonuclease XRN1. Bypasses therefore the regulatory steps of deadenylation and decapping normally required for XRN1 activation. This chain is Shutoff alkaline exonuclease, found in Epstein-Barr virus (strain GD1) (HHV-4).